We begin with the raw amino-acid sequence, 109 residues long: uncharacterized protein (109 aa).

This is an uncharacterized protein from Treponema pallidum (strain Nichols).